Here is a 129-residue protein sequence, read N- to C-terminus: Small ribosomal subunit protein uS11 (129 aa).

The protein belongs to the universal ribosomal protein uS11 family. As to quaternary structure, part of the 30S ribosomal subunit. Interacts with proteins S7 and S18. Binds to IF-3.

Located on the platform of the 30S subunit, it bridges several disparate RNA helices of the 16S rRNA. Forms part of the Shine-Dalgarno cleft in the 70S ribosome. The chain is Small ribosomal subunit protein uS11 from Roseobacter denitrificans (strain ATCC 33942 / OCh 114) (Erythrobacter sp. (strain OCh 114)).